Reading from the N-terminus, the 398-residue chain is Succinate--CoA ligase [ADP-forming] subunit beta (398 aa).

One can recognise an ATP-grasp domain in the interval 9-254 (KRLLHEYGAP…TSEEDPKEIE (246 aa)). ATP-binding positions include Lys46, 53 to 55 (GRG), Glu109, Ala112, and Glu117. Asn209 and Asp223 together coordinate Mg(2+). Residues Asn274 and 331 to 333 (GIM) each bind substrate.

The protein belongs to the succinate/malate CoA ligase beta subunit family. Heterotetramer of two alpha and two beta subunits. Mg(2+) serves as cofactor.

It carries out the reaction succinate + ATP + CoA = succinyl-CoA + ADP + phosphate. It catalyses the reaction GTP + succinate + CoA = succinyl-CoA + GDP + phosphate. It functions in the pathway carbohydrate metabolism; tricarboxylic acid cycle; succinate from succinyl-CoA (ligase route): step 1/1. Its function is as follows. Succinyl-CoA synthetase functions in the citric acid cycle (TCA), coupling the hydrolysis of succinyl-CoA to the synthesis of either ATP or GTP and thus represents the only step of substrate-level phosphorylation in the TCA. The beta subunit provides nucleotide specificity of the enzyme and binds the substrate succinate, while the binding sites for coenzyme A and phosphate are found in the alpha subunit. The sequence is that of Succinate--CoA ligase [ADP-forming] subunit beta from Bartonella henselae (strain ATCC 49882 / DSM 28221 / CCUG 30454 / Houston 1) (Rochalimaea henselae).